Here is a 107-residue protein sequence, read N- to C-terminus: Dispanin subfamily A member 2b (107 aa).

The Extracellular segment spans residues 1–31 (MEYRTDQVPMSPRSVQGAPGTLPIRDHLPWS). A helical membrane pass occupies residues 32 to 52 (IFNLFYMNVCCLGLTAMIFSV). 2 S-palmitoyl cysteine lipidation sites follow: Cys41 and Cys42. At 53–77 (KSRDRKVVGDVEGARHYGSTARSLN) the chain is on the cytoplasmic side. Residues 78-98 (IAATVLGILLIIILIGLAATG) form a helical membrane-spanning segment. At 99-107 (TIQALKYKG) the chain is on the extracellular side.

This sequence belongs to the CD225/Dispanin family. In terms of tissue distribution, expressed various cell types in torpedo electric organ and muscle, especially fibroblasts, capillary endothelial cells, and axonal cuff cells.

The protein localises to the cell membrane. In Torpedo marmorata (Marbled electric ray), this protein is Dispanin subfamily A member 2b.